A 29-amino-acid polypeptide reads, in one-letter code: Cytochrome b6-f complex subunit 8 (29 aa).

The helical transmembrane segment at 3–23 (ILTLGWVGLLGLFTYSIAMVV) threads the bilayer.

It belongs to the PetN family. As to quaternary structure, the 4 large subunits of the cytochrome b6-f complex are cytochrome b6, subunit IV (17 kDa polypeptide, PetD), cytochrome f and the Rieske protein, while the 4 small subunits are PetG, PetL, PetM and PetN. The complex functions as a dimer.

Its subcellular location is the cellular thylakoid membrane. Its function is as follows. Component of the cytochrome b6-f complex, which mediates electron transfer between photosystem II (PSII) and photosystem I (PSI), cyclic electron flow around PSI, and state transitions. The chain is Cytochrome b6-f complex subunit 8 from Cyanothece sp. (strain PCC 7425 / ATCC 29141).